A 187-amino-acid chain; its full sequence is MRRSMKISAEMYKLLIERTLDGFSVIELRDEFIVIKDSLIDPDEAYKKVYRQILRFIKKGWLNGEGSGRQKRYFQTDTFKALHAEPKSENVDIEIVLNQDYSVLVSERNQYKGELEIVLGEIDEYQSLNIRFPELEPKLITLLDEAKERSACLLGKVNGLTNVLKVLSGQKIVHQKFKTKALLFERT.

Functionally, represses the transcription of several genes encoded within the Vibrio 7th pandemic island-1 (VSP-1), including dncV, VC_0176, VC_0178 and VC_0180. This chain is Transcriptional regulator VspR (vspR), found in Vibrio cholerae serotype O1 (strain ATCC 39315 / El Tor Inaba N16961).